A 1976-amino-acid polypeptide reads, in one-letter code: DNA-directed RNA polymerase V subunit 1 (1976 aa).

6 residues coordinate Zn(2+): Cys57, Cys60, Cys68, His71, Cys98, and Cys101. Mg(2+) contacts are provided by Asp449, Asp451, and Asp453. A bridging helix region spans residues 751-763 (PYEEMAHSIAARE). The stretch at 1215–1216 (WG) is repeat 1. An 18 X 2 AA repeats of [WG]-[GW] repeats region spans residues 1215–1693 (WGKRVDVGTG…AKKFPSSGGW (479 aa)). Disordered regions lie at residues 1272–1291 (EEEMAEWAESPERDSALGEP), 1298–1718 (DFQN…EDNL), and 1847–1976 (FTKP…QTQT). Basic and acidic residues-rich tracts occupy residues 1281 to 1291 (SPERDSALGEP) and 1298 to 1307 (DFQNLHDEGK). The stretch at 1329 to 1330 (WG) is repeat 2. A compositionally biased stretch (polar residues) spans 1332-1348 (SKSTGGEANPESNWEKT). Residues 1349–1371 (TNVEKEDAWSSWNTRKDAQESSK) are compositionally biased toward basic and acidic residues. A run of 15 repeats spans residues 1378-1379 (WG), 1415-1416 (WG), 1430-1431 (WG), 1439-1440 (WG), 1447-1448 (WG), 1464-1465 (WG), 1498-1499 (WG), 1528-1529 (WG), 1545-1546 (WG), 1562-1563 (WG), 1596-1597 (WG), 1604-1605 (WG), 1621-1622 (WG), 1638-1639 (WG), and 1641-1642 (WG). Residues 1415-1430 (WGHKSVSDKSWDKKNW) are compositionally biased toward basic and acidic residues. Polar residues predominate over residues 1491–1501 (TESNGATWGSS). Over residues 1648–1678 (AEDKDTNEDDRNPWVSLKETKSREKDDKERS) the composition is skewed to basic and acidic residues. 2 repeat units span residues 1680–1681 (WG) and 1692–1693 (GW). The segment covering 1869–1878 (EQSQPPNQSI) has biased composition (polar residues). Positions 1886–1976 (QTQTQSQSPS…SSQSPSQTQT (91 aa)) are enriched in low complexity.

The protein belongs to the RNA polymerase beta' chain family. Component of the RNA polymerase V complex. Interacts with NRPD4, NRPD2A, and (via C-terminus) with AGO4. Interacts with SUVH2. In terms of tissue distribution, mostly expressed in flowers, and, to a lower extent, in leaves. Present in sperm cells.

It localises to the nucleus. It is found in the nucleolus. The catalysed reaction is RNA(n) + a ribonucleoside 5'-triphosphate = RNA(n+1) + diphosphate. In terms of biological role, DNA-dependent RNA polymerase catalyzes the transcription of DNA into RNA using the four ribonucleoside triphosphates as substrates. Largest and catalytic component of RNA polymerase V involved in RNA-directed DNA methylation-dependent (RdDM) silencing of endogenous repeated sequences, including transposable elements. Also required for full erasure of methylation when the RNA trigger is withdrawn. Seems also involved in the synthesis of short-interfering RNAs (siRNA). Essential component of a self-reinforcing loop coupling de novo DNA methylation to siRNA production. Involved in the maintenance of post-transcriptional RNA silencing. The polypeptide is DNA-directed RNA polymerase V subunit 1 (NRPE1) (Arabidopsis thaliana (Mouse-ear cress)).